Here is a 38-residue protein sequence, read N- to C-terminus: Photosystem II reaction center protein L (38 aa).

The helical transmembrane segment at Ser17 to Phe37 threads the bilayer.

The protein belongs to the PsbL family. As to quaternary structure, PSII is composed of 1 copy each of membrane proteins PsbA, PsbB, PsbC, PsbD, PsbE, PsbF, PsbH, PsbI, PsbJ, PsbK, PsbL, PsbM, PsbT, PsbX, PsbY, PsbZ, Psb30/Ycf12, at least 3 peripheral proteins of the oxygen-evolving complex and a large number of cofactors. It forms dimeric complexes.

Its subcellular location is the plastid. The protein localises to the chloroplast thylakoid membrane. In terms of biological role, one of the components of the core complex of photosystem II (PSII). PSII is a light-driven water:plastoquinone oxidoreductase that uses light energy to abstract electrons from H(2)O, generating O(2) and a proton gradient subsequently used for ATP formation. It consists of a core antenna complex that captures photons, and an electron transfer chain that converts photonic excitation into a charge separation. This subunit is found at the monomer-monomer interface and is required for correct PSII assembly and/or dimerization. This Ephedra sinica (Chinese ephedra) protein is Photosystem II reaction center protein L.